A 155-amino-acid chain; its full sequence is Small ribosomal subunit protein uS7c (155 aa).

This sequence belongs to the universal ribosomal protein uS7 family. In terms of assembly, part of the 30S ribosomal subunit.

Its subcellular location is the plastid. The protein resides in the chloroplast. In terms of biological role, one of the primary rRNA binding proteins, it binds directly to 16S rRNA where it nucleates assembly of the head domain of the 30S subunit. The polypeptide is Small ribosomal subunit protein uS7c (rps7) (Ginkgo biloba (Ginkgo)).